The following is a 346-amino-acid chain: MDFTIFPPEFNSLNIQGSARPFLVAANAWKNLSNELSYAASRFESEINGLITSWRGPSSTIMAAAVAPFRAWIVTTASLAELVADHISVVAGAYEAAHAAHVPLPVIETNRLTRLALATTNIFGIHTPAIFALDALYAQYWSQDGEAMNLYATMAAAAARLTPFSPPAPIANPGALARLYELIGSVSETVGSFAAPATKNLPSKLWTLLTKGTYPLTAARISSIPVEYVLAFVEGSNMGQMMGNLAMRSLTPTLKGPLELLPNAVRPAVSATLGNADTIGGLSVPPSWVADKSITPLAKAVPTSAPGGPSGTSWAQLGLASLAGGAVGAVAARTRSGVILRSPAAG.

The PPE stretch occupies residues 6–159 (FPPEFNSLNI…LYATMAAAAA (154 aa)).

This sequence belongs to the mycobacterial PPE family. As to quaternary structure, interacts with LRR motifs 15-20 of host Toll-like receptor 2 (TLR2).

The protein localises to the secreted. Its subcellular location is the cell wall. It localises to the cell surface. In terms of biological role, induces pro-inflammatory responses. Induces host TLR1/2 heterodimerization, which causes an increased recruitment of IRAK1, MYD88, and protein kinase C epsilon (PRKCE) to the downstream TLR-signaling complex that translocates PRKCE into the nucleus in an IRAK1-dependent manner. PRKCE-mediated phosphorylation allowed the nuclear IRAK3 to be exported to the cytoplasm, leading to increased activation of ERK1/2, stabilization of MAPK phosphatase 1 (MKP1), and induction of TNF-alpha with concomitant down-regulation of MAP kinase p38. Functionally, during M.tuberculosis and HIV-1 co-infection, can stimulate transcription from the long terminal repeat (LTR) of HIV-1 in monocyte/macrophage cells. Interaction with human TLR2 activates the NF-kappa-B transcription factor, which binds to the promoter region of the HIV-1 and induces HIV-1 gene expression. The polypeptide is PPE family protein PPE17 (PPE17) (Mycobacterium tuberculosis (strain ATCC 25618 / H37Rv)).